The primary structure comprises 76 residues: High-potential iron-sulfur protein isozyme 2 (76 aa).

[4Fe-4S] cluster contacts are provided by cysteine 38, cysteine 41, cysteine 54, and cysteine 70.

The protein belongs to the high-potential iron-sulfur protein (HiPIP) family. Homodimer.

Specific class of high-redox-potential 4Fe-4S ferredoxins. Functions in anaerobic electron transport in most purple and in some other photosynthetic bacteria and in at least one genus (Paracoccus) of halophilic, denitrifying bacteria. The protein is High-potential iron-sulfur protein isozyme 2 (hip2) of Halorhodospira halophila (Ectothiorhodospira halophila).